The sequence spans 390 residues: Acetylornithine aminotransferase (390 aa).

Pyridoxal 5'-phosphate is bound by residues 105–106 and F132; that span reads GA. N(2)-acetyl-L-ornithine is bound at residue R135. Residue 217-220 coordinates pyridoxal 5'-phosphate; it reads DEVQ. The residue at position 246 (K246) is an N6-(pyridoxal phosphate)lysine. S274 provides a ligand contact to N(2)-acetyl-L-ornithine. T275 contributes to the pyridoxal 5'-phosphate binding site.

Belongs to the class-III pyridoxal-phosphate-dependent aminotransferase family. ArgD subfamily. As to quaternary structure, homodimer. Pyridoxal 5'-phosphate is required as a cofactor.

The protein localises to the cytoplasm. It carries out the reaction N(2)-acetyl-L-ornithine + 2-oxoglutarate = N-acetyl-L-glutamate 5-semialdehyde + L-glutamate. It functions in the pathway amino-acid biosynthesis; L-arginine biosynthesis; N(2)-acetyl-L-ornithine from L-glutamate: step 4/4. The protein is Acetylornithine aminotransferase of Methanothermobacter thermautotrophicus (strain ATCC 29096 / DSM 1053 / JCM 10044 / NBRC 100330 / Delta H) (Methanobacterium thermoautotrophicum).